Here is a 430-residue protein sequence, read N- to C-terminus: Tyrosine--tRNA ligase (430 aa).

L-tyrosine is bound at residue Tyr-32. Positions 37–46 (PTADSLHIGH) match the 'HIGH' region motif. Residues Tyr-172 and Gln-176 each coordinate L-tyrosine. The short motif at 232–236 (KFGKT) is the 'KMSKS' region element. Lys-235 is a binding site for ATP. The region spanning 362–430 (ISLVDLLADA…KKSYYLIIVE (69 aa)) is the S4 RNA-binding domain.

Belongs to the class-I aminoacyl-tRNA synthetase family. TyrS type 1 subfamily. In terms of assembly, homodimer.

It localises to the cytoplasm. The catalysed reaction is tRNA(Tyr) + L-tyrosine + ATP = L-tyrosyl-tRNA(Tyr) + AMP + diphosphate + H(+). Catalyzes the attachment of tyrosine to tRNA(Tyr) in a two-step reaction: tyrosine is first activated by ATP to form Tyr-AMP and then transferred to the acceptor end of tRNA(Tyr). The polypeptide is Tyrosine--tRNA ligase (Porphyromonas gingivalis (strain ATCC 33277 / DSM 20709 / CIP 103683 / JCM 12257 / NCTC 11834 / 2561)).